We begin with the raw amino-acid sequence, 408 residues long: Glutathione-independent formaldehyde dehydrogenase (408 aa).

Zn(2+) is bound at residue C61. NAD(+)-binding residues include G62, S63, and H66. H82, C112, C115, C118, C126, and D184 together coordinate Zn(2+). Residues V212, D232, R237, V277, H284, P311, L313, G348, and T350 each contribute to the NAD(+) site.

The protein belongs to the zinc-containing alcohol dehydrogenase family. Zn(2+) is required as a cofactor.

It carries out the reaction formaldehyde + NAD(+) + H2O = formate + NADH + 2 H(+). Its activity is regulated as follows. Activity is not inhibited by EDTA, which is probably not sufficient to displace the bound metal. Functionally, dehydrogenase that catalyzes the NAD(+)-dependent oxidation of formaldehyde. Exhibits lower activity with acetaldehyde (about 10-fold lower than for formaldehyde), but cannot use methanol, ethanol, 1-butanol, glyoxal or formic acid. Is involved in formaldehyde detoxification. The chain is Glutathione-independent formaldehyde dehydrogenase from Bacillus subtilis (strain 168).